Consider the following 445-residue polypeptide: Asparagine--tRNA ligase (445 aa).

This sequence belongs to the class-II aminoacyl-tRNA synthetase family. As to quaternary structure, homodimer.

Its subcellular location is the cytoplasm. The enzyme catalyses tRNA(Asn) + L-asparagine + ATP = L-asparaginyl-tRNA(Asn) + AMP + diphosphate + H(+). This Deinococcus deserti (strain DSM 17065 / CIP 109153 / LMG 22923 / VCD115) protein is Asparagine--tRNA ligase.